The following is a 120-amino-acid chain: MSVYVDFDVPADLEDDALEALEVARDTGSVKKGTNETTKAVERGNAELVFVAEDVSPEEVVMHLPEIATEKEIPYVFVGTQDDIGHAAGLQVGSAAAAIVDAGEANGEVEDIAEKVEELQ.

It belongs to the eukaryotic ribosomal protein eL8 family. Part of the 50S ribosomal subunit. Probably part of the RNase P complex.

Its subcellular location is the cytoplasm. In terms of biological role, multifunctional RNA-binding protein that recognizes the K-turn motif in ribosomal RNA, the RNA component of RNase P, box H/ACA, box C/D and box C'/D' sRNAs. This is Large ribosomal subunit protein eL8 from Natronomonas pharaonis (strain ATCC 35678 / DSM 2160 / CIP 103997 / JCM 8858 / NBRC 14720 / NCIMB 2260 / Gabara) (Halobacterium pharaonis).